We begin with the raw amino-acid sequence, 189 residues long: Cyclin-dependent kinase inhibitor 5 (189 aa).

Over residues 73–93 (KQQKQQLIPSVNQCQTKNPRA) the composition is skewed to polar residues. The segment at 73-107 (KQQKQQLIPSVNQCQTKNPRASSGPAKKLEPDTTT) is disordered.

This sequence belongs to the CDI family. ICK/KRP subfamily. As to quaternary structure, interacts with CYCD4-1. Does not interact with CDKA-1. In terms of tissue distribution, expressed in flowers and at lower levels in roots and leaves.

It is found in the nucleus. Its subcellular location is the nucleoplasm. Functionally, inhibits CYCD2-1/CDKA-1 complex kinase activity without interaction with the complex. This is Cyclin-dependent kinase inhibitor 5 (KRP5) from Arabidopsis thaliana (Mouse-ear cress).